The primary structure comprises 201 residues: Imidazole glycerol phosphate synthase subunit HisH (201 aa).

A Glutamine amidotransferase type-1 domain is found at 1–201 (MVFIADYGAG…LQVLRNFAEC (201 aa)). The active-site Nucleophile is the C79. Residues H183 and E185 contribute to the active site.

As to quaternary structure, heterodimer of HisH and HisF.

The protein resides in the cytoplasm. It catalyses the reaction 5-[(5-phospho-1-deoxy-D-ribulos-1-ylimino)methylamino]-1-(5-phospho-beta-D-ribosyl)imidazole-4-carboxamide + L-glutamine = D-erythro-1-(imidazol-4-yl)glycerol 3-phosphate + 5-amino-1-(5-phospho-beta-D-ribosyl)imidazole-4-carboxamide + L-glutamate + H(+). The catalysed reaction is L-glutamine + H2O = L-glutamate + NH4(+). It functions in the pathway amino-acid biosynthesis; L-histidine biosynthesis; L-histidine from 5-phospho-alpha-D-ribose 1-diphosphate: step 5/9. Functionally, IGPS catalyzes the conversion of PRFAR and glutamine to IGP, AICAR and glutamate. The HisH subunit catalyzes the hydrolysis of glutamine to glutamate and ammonia as part of the synthesis of IGP and AICAR. The resulting ammonia molecule is channeled to the active site of HisF. This is Imidazole glycerol phosphate synthase subunit HisH from Chlorobium luteolum (strain DSM 273 / BCRC 81028 / 2530) (Pelodictyon luteolum).